Here is a 231-residue protein sequence, read N- to C-terminus: Small ribosomal subunit protein uS3 (231 aa).

The KH type-2 domain occupies 17–86 (VEKYLTKELK…SPQIEVQQVQ (70 aa)).

This sequence belongs to the universal ribosomal protein uS3 family. Part of the 30S ribosomal subunit.

Functionally, binds the lower part of the 30S subunit head. This is Small ribosomal subunit protein uS3 from Methanoregula boonei (strain DSM 21154 / JCM 14090 / 6A8).